Consider the following 525-residue polypeptide: Polyamine aminopropyltransferase 1 (525 aa).

Transmembrane regions (helical) follow at residues 21–41, 53–73, 89–109, 117–137, 155–175, and 180–200; these read ALLVLAVFVVASCGLAYELIA, ILQFSSIIGAYLFAMGIGSWV, LELLVGLFGGVSAAALFLLFA, LVLYALVTVIGVLVGMEIPLV, VLTFDYLGALAVSLLFPLVLA, and LVRTGFLFGLCNTAIAVWTLW. A PABS domain is found at 220 to 464; sequence AGMVGAALLA…GEWGFILAAP (245 aa). Residues 222–471 form a spermidine synthase region; it reads MVGAALLAGF…AAPGRADFRP (250 aa). Gln-259 provides a ligand contact to S-methyl-5'-thioadenosine. Residues His-289 and Asp-313 each contribute to the spermidine site. Residues Asp-333 and 367 to 368 each bind S-methyl-5'-thioadenosine; that span reads DA. The Proton acceptor role is filled by Asp-385.

The protein belongs to the spermidine/spermine synthase family. In terms of assembly, homodimer or homotetramer.

It is found in the cell membrane. The catalysed reaction is S-adenosyl 3-(methylsulfanyl)propylamine + putrescine = S-methyl-5'-thioadenosine + spermidine + H(+). The protein operates within amine and polyamine biosynthesis; spermidine biosynthesis; spermidine from putrescine: step 1/1. Its function is as follows. Catalyzes the irreversible transfer of a propylamine group from the amino donor S-adenosylmethioninamine (decarboxy-AdoMet) to putrescine (1,4-diaminobutane) to yield spermidine. This is Polyamine aminopropyltransferase 1 from Ralstonia nicotianae (strain ATCC BAA-1114 / GMI1000) (Ralstonia solanacearum).